A 170-amino-acid chain; its full sequence is Cytochrome c-type biogenesis protein CcmE (170 aa).

At 1–7 (MTRKKRR) the chain is on the cytoplasmic side. Residues 8-28 (LILIAACGSVLALAVGLILYA) form a helical; Signal-anchor for type II membrane protein membrane-spanning segment. The Periplasmic segment spans residues 29–170 (MSGSIVFFRS…DSTLGPRSER (142 aa)). Heme-binding residues include H122 and Y126. Positions 132–170 (ADALKAQGRWQEGGPNRGGPAPKPATAAADSTLGPRSER) are disordered.

The protein belongs to the CcmE/CycJ family.

The protein localises to the cell inner membrane. Heme chaperone required for the biogenesis of c-type cytochromes. Transiently binds heme delivered by CcmC and transfers the heme to apo-cytochromes in a process facilitated by CcmF and CcmH. This is Cytochrome c-type biogenesis protein CcmE from Methylobacterium radiotolerans (strain ATCC 27329 / DSM 1819 / JCM 2831 / NBRC 15690 / NCIMB 10815 / 0-1).